Here is a 495-residue protein sequence, read N- to C-terminus: 3-octaprenyl-4-hydroxybenzoate carboxy-lyase (495 aa).

Residue Asn172 participates in Mn(2+) binding. Prenylated FMN-binding positions include Ile175–Arg177, Arg189–Leu191, and Arg194–Gly195. Glu238 provides a ligand contact to Mn(2+). Asp287 acts as the Proton donor in catalysis.

The protein belongs to the UbiD family. In terms of assembly, homohexamer. Prenylated FMN is required as a cofactor. It depends on Mn(2+) as a cofactor.

The protein resides in the cell membrane. It carries out the reaction a 4-hydroxy-3-(all-trans-polyprenyl)benzoate + H(+) = a 2-(all-trans-polyprenyl)phenol + CO2. It participates in cofactor biosynthesis; ubiquinone biosynthesis. Functionally, catalyzes the decarboxylation of 3-octaprenyl-4-hydroxy benzoate to 2-octaprenylphenol, an intermediate step in ubiquinone biosynthesis. The polypeptide is 3-octaprenyl-4-hydroxybenzoate carboxy-lyase (Marinobacter nauticus (strain ATCC 700491 / DSM 11845 / VT8) (Marinobacter aquaeolei)).